The following is a 122-amino-acid chain: Large ribosomal subunit protein bL12 (122 aa).

Belongs to the bacterial ribosomal protein bL12 family. In terms of assembly, homodimer. Part of the ribosomal stalk of the 50S ribosomal subunit. Forms a multimeric L10(L12)X complex, where L10 forms an elongated spine to which 2 to 4 L12 dimers bind in a sequential fashion. Binds GTP-bound translation factors.

Functionally, forms part of the ribosomal stalk which helps the ribosome interact with GTP-bound translation factors. Is thus essential for accurate translation. The polypeptide is Large ribosomal subunit protein bL12 (Staphylococcus epidermidis (strain ATCC 35984 / DSM 28319 / BCRC 17069 / CCUG 31568 / BM 3577 / RP62A)).